Here is a 522-residue protein sequence, read N- to C-terminus: MSQDLQKEVASRKTFAIISHPDAGKTTITEQLLLFGGVIRSAGTVKGKKSGKFATSDWMEIEKQRGISVTSSVMQFDYNGSRINILDTPGHSDFSEDTYRTLMAVDSAVMVIDAAKGIEAQTLKLFKVCRMRGIPIFTFINKMDRQGKMPLELLAELEEVLGIESYPMNWPIGMGKELAGLYDRYHRVIEQYRSEEDERFLPLGEDGDLKEAHAIQKLLYYDQALEEIMLLDEAGNDFSRERIIAGEQTPVFFGSALTNFGVETFLRTFVDFAPSPSSHESNEGVIEADNPKFSGFIFKIQANMNPAHRDRIAFIRICSGEFERGMNVTLTRTGKSMKLANSTQFMADDRETVNRAVAGDIIGLYDTGNYQIGDTITNGSKKLEFEKLPQFTPELFMRVYAKNVMKQKHFHKGVEQLVQEGAIQLFKTWRTEEYIIGAVGQLQFEVFEHRMRGEYNSEIRMEPIGKKIARWVKEEDADEKLSTARSMLVKDRFDQPLFLFENEFAINWFNDKNPDIELTSLL.

Positions 10–277 (ASRKTFAIIS…TFVDFAPSPS (268 aa)) constitute a tr-type G domain. GTP is bound by residues 19–26 (SHPDAGKT), 87–91 (DTPGH), and 141–144 (NKMD).

Belongs to the TRAFAC class translation factor GTPase superfamily. Classic translation factor GTPase family. PrfC subfamily.

The protein localises to the cytoplasm. Its function is as follows. Increases the formation of ribosomal termination complexes and stimulates activities of RF-1 and RF-2. It binds guanine nucleotides and has strong preference for UGA stop codons. It may interact directly with the ribosome. The stimulation of RF-1 and RF-2 is significantly reduced by GTP and GDP, but not by GMP. The chain is Peptide chain release factor 3 from Listeria monocytogenes serotype 4b (strain CLIP80459).